Here is a 728-residue protein sequence, read N- to C-terminus: 1,4-alpha-glucan branching enzyme GlgB (728 aa).

Catalysis depends on Asp405, which acts as the Nucleophile. Catalysis depends on Glu458, which acts as the Proton donor.

The protein belongs to the glycosyl hydrolase 13 family. GlgB subfamily. Monomer.

The enzyme catalyses Transfers a segment of a (1-&gt;4)-alpha-D-glucan chain to a primary hydroxy group in a similar glucan chain.. It participates in glycan biosynthesis; glycogen biosynthesis. Functionally, catalyzes the formation of the alpha-1,6-glucosidic linkages in glycogen by scission of a 1,4-alpha-linked oligosaccharide from growing alpha-1,4-glucan chains and the subsequent attachment of the oligosaccharide to the alpha-1,6 position. The protein is 1,4-alpha-glucan branching enzyme GlgB of Salmonella typhi.